We begin with the raw amino-acid sequence, 245 residues long: Ribonuclease PH (245 aa).

Residues arginine 87 and 125–127 (GTR) contribute to the phosphate site.

This sequence belongs to the RNase PH family. Homohexameric ring arranged as a trimer of dimers.

It carries out the reaction tRNA(n+1) + phosphate = tRNA(n) + a ribonucleoside 5'-diphosphate. Its function is as follows. Phosphorolytic 3'-5' exoribonuclease that plays an important role in tRNA 3'-end maturation. Removes nucleotide residues following the 3'-CCA terminus of tRNAs; can also add nucleotides to the ends of RNA molecules by using nucleoside diphosphates as substrates, but this may not be physiologically important. Probably plays a role in initiation of 16S rRNA degradation (leading to ribosome degradation) during starvation. The polypeptide is Ribonuclease PH (Streptomyces griseus subsp. griseus (strain JCM 4626 / CBS 651.72 / NBRC 13350 / KCC S-0626 / ISP 5235)).